Reading from the N-terminus, the 553-residue chain is Glutamate--tRNA ligase (553 aa).

The 'HIGH' region motif lies at 103-113 (PNPSGPLHIGH).

Belongs to the class-I aminoacyl-tRNA synthetase family. Glutamate--tRNA ligase type 2 subfamily.

The protein resides in the cytoplasm. The catalysed reaction is tRNA(Glu) + L-glutamate + ATP = L-glutamyl-tRNA(Glu) + AMP + diphosphate. Functionally, catalyzes the attachment of glutamate to tRNA(Glu) in a two-step reaction: glutamate is first activated by ATP to form Glu-AMP and then transferred to the acceptor end of tRNA(Glu). This is Glutamate--tRNA ligase from Methanothermobacter thermautotrophicus (strain ATCC 29096 / DSM 1053 / JCM 10044 / NBRC 100330 / Delta H) (Methanobacterium thermoautotrophicum).